Here is a 375-residue protein sequence, read N- to C-terminus: Sperm microtubule associated protein 2 (375 aa).

Residues 1–78 form a disordered region; it reads MGELGEHRAS…MAGEELPETS (78 aa). Residues 59–75 are compositionally biased toward acidic residues; that stretch reads EPEEEIPPEEMAGEELP. THEG repeat units lie at residues 110–129, 176–195, 214–233, 250–269, 282–301, 318–337, and 352–371; these read AKGR…PKTN, TITV…PKRF, STLE…PKVR, AAQM…PRPP, PKPY…PKAL, VTKN…PKIR, and ASLV…PKYI. Ser-287 carries the phosphoserine modification.

As to quaternary structure, interacts with CCT5. As to expression, testis specific (at protein level). Specifically expressed in spermatids; Sertoli cells maintain the level of expression in spermatids. If isolated spermatids are cultivated for 16 hours alone, the expression of THEG is down-regulated. May require signals from Sertoli cells to initiate changes in its gene expression through spermatogenesis.

It is found in the nucleus. May be involved (but not essential) in spermatogenesis. This Mus musculus (Mouse) protein is Sperm microtubule associated protein 2.